We begin with the raw amino-acid sequence, 500 residues long: Protein FAM83F (500 aa).

A2 carries the post-translational modification N-acetylalanine. The interval 2–300 (AESQLNCLDE…LYAISEEVDL (299 aa)) is DUF1669. S4 bears the Phosphoserine mark. 3 disordered regions span residues 82–109 (NARGKSKAKAKAPAPAPAESGESLAYWP), 347–366 (QQREAGGNPEGQEEGASGGE), and 391–500 (IPLG…CVIS). Residues 397 to 419 (SQKDGRMVSHMHRDLKPKSREAP) are compositionally biased toward basic and acidic residues. 2 stretches are compositionally biased toward low complexity: residues 425-442 (GEAARGEAAPARRFSSRL) and 458-468 (SSVSTETSEVE). Polar residues predominate over residues 477–500 (ENSSADISGKTSPSSAKPSNCVIS). Residue S479 is modified to Phosphoserine.

Belongs to the FAM83 family. As to quaternary structure, directly interacts (via DUF1669) with CSNK1A1 and CSNK1A1L.

Its subcellular location is the cell membrane. The sequence is that of Protein FAM83F (FAM83F) from Homo sapiens (Human).